The following is a 162-amino-acid chain: Autophagy-related protein 8 (162 aa).

Over residues 1 to 27 the composition is skewed to basic and acidic residues; it reads MRSKFKDEHPFEKRKAEAERIRQKYSD. The tract at residues 1 to 42 is disordered; that stretch reads MRSKFKDEHPFEKRKAEAERIRQKYSDRIPPSPHSPASRLIG. The Phosphatidylethanolamine amidated glycine moiety is linked to residue Gly157. The propeptide at 158 to 162 is removed in mature form; it reads GFETA.

It belongs to the ATG8 family.

Its subcellular location is the cytoplasmic vesicle. The protein resides in the autophagosome membrane. It localises to the vacuole membrane. Functionally, ubiquitin-like modifier involved in autophagosome formation. With ATG4, mediates the delivery of the autophagosomes to the vacuole via the microtubule cytoskeleton. Required for selective autophagic degradation of the nucleus (nucleophagy) as well as for mitophagy which contributes to regulate mitochondrial quantity and quality by eliminating the mitochondria to a basal level to fulfill cellular energy requirements and preventing excess ROS production. Also participates in membrane fusion events that take place in the early secretory pathway. Also involved in endoplasmic reticulum-specific autophagic process and is essential for the survival of cells subjected to severe ER stress. The ATG8-PE conjugate mediates tethering between adjacent membranes and stimulates membrane hemifusion, leading to expansion of the autophagosomal membrane during autophagy. This Colletotrichum higginsianum (strain IMI 349063) (Crucifer anthracnose fungus) protein is Autophagy-related protein 8.